Here is a 136-residue protein sequence, read N- to C-terminus: MAKQDNSSSHENTLTEMQRYVTQEHGTEPPYSGKLLHNKDEGIYHCLICRAPLFLSDSKYDSGCGWPSFYQPFSPEAIRYLEDDSHGMQRVEIRCGSCDAHLGHVFPDGPQPTGERFCVNSASLSFTDDNGNKTLG.

The 123-residue stretch at 7-129 (SSSHENTLTE…NSASLSFTDD (123 aa)) folds into the MsrB domain. Residues Cys-46, Cys-49, Cys-95, and Cys-98 each contribute to the Zn(2+) site. The active-site Nucleophile is the Cys-118.

It belongs to the MsrB Met sulfoxide reductase family. It depends on Zn(2+) as a cofactor.

It carries out the reaction L-methionyl-[protein] + [thioredoxin]-disulfide + H2O = L-methionyl-(R)-S-oxide-[protein] + [thioredoxin]-dithiol. The protein is Peptide methionine sulfoxide reductase MsrB of Erwinia tasmaniensis (strain DSM 17950 / CFBP 7177 / CIP 109463 / NCPPB 4357 / Et1/99).